A 237-amino-acid polypeptide reads, in one-letter code: DNA repair protein RecO (237 aa).

The protein belongs to the RecO family.

In terms of biological role, involved in DNA repair and RecF pathway recombination. This is DNA repair protein RecO from Rickettsia akari (strain Hartford).